Here is a 243-residue protein sequence, read N- to C-terminus: MAKGIPVLEIFGPTIQGEGMVIGQKTMFVRTAGCDYSCSWCDSAFTWDGSAKKDIRWMTAEEIFAELKDIGGDAFSHVTISGGNPALLKQLDAFIELLKENNIRAALETQGTVYQDWFTLIDDLTISPKPPSSKMVTNFQKLDHILTSLQENDRQHAVSLKVVIFNDEDLEFAKTVHKRYPGIPFYLQVGNDDVHTTDDQSLIAHLLGKYEALVDKVAVDAELNLVRVLPQLHTLLWGNKRGV.

Residues 15–17 and arginine 30 each bind substrate; that span reads IQG. Residues 21 to 239 form the Radical SAM core domain; that stretch reads VIGQKTMFVR…PQLHTLLWGN (219 aa). Residues cysteine 34, cysteine 38, and cysteine 41 each contribute to the [4Fe-4S] cluster site. Residue serine 43 coordinates Mg(2+). Serine 81 provides a ligand contact to substrate. Residues glycine 83 and 127–129 contribute to the S-adenosyl-L-methionine site; that span reads SPK.

The protein belongs to the radical SAM superfamily. 7-carboxy-7-deazaguanine synthase family. As to quaternary structure, homodimer. [4Fe-4S] cluster serves as cofactor. Requires S-adenosyl-L-methionine as cofactor. The cofactor is Mg(2+).

It catalyses the reaction 6-carboxy-5,6,7,8-tetrahydropterin + H(+) = 7-carboxy-7-deazaguanine + NH4(+). The protein operates within purine metabolism; 7-cyano-7-deazaguanine biosynthesis. Its function is as follows. Catalyzes the complex heterocyclic radical-mediated conversion of 6-carboxy-5,6,7,8-tetrahydropterin (CPH4) to 7-carboxy-7-deazaguanine (CDG), a step common to the biosynthetic pathways of all 7-deazapurine-containing compounds. In Bacillus subtilis (strain 168), this protein is 7-carboxy-7-deazaguanine synthase.